The chain runs to 563 residues: Arginine--tRNA ligase (563 aa).

The 'HIGH' region motif lies at 122 to 132 (PNIAKPMSMGH).

Belongs to the class-I aminoacyl-tRNA synthetase family. In terms of assembly, monomer.

It is found in the cytoplasm. The catalysed reaction is tRNA(Arg) + L-arginine + ATP = L-arginyl-tRNA(Arg) + AMP + diphosphate. The sequence is that of Arginine--tRNA ligase from Levilactobacillus brevis (strain ATCC 367 / BCRC 12310 / CIP 105137 / JCM 1170 / LMG 11437 / NCIMB 947 / NCTC 947) (Lactobacillus brevis).